Here is a 223-residue protein sequence, read N- to C-terminus: Neurotrophic factor BDNF precursor form (223 aa).

The N-terminal stretch at 1 to 5 (SCMKA) is a signal peptide. Residues 6 to 114 (APMKEVSIRG…AANMSMRVRR (109 aa)) constitute a propeptide that is removed on maturation. N-linked (GlcNAc...) asparagine glycosylation occurs at Asn107. 2 disulfide bridges follow: Cys127–Cys194 and Cys172–Cys223.

The protein belongs to the NGF-beta family.

It is found in the secreted. Its function is as follows. Promotes the survival of neuronal populations that are all located either in the central nervous system or directly connected to it. The polypeptide is Neurotrophic factor BDNF precursor form (BDNF) (Charina bottae (Northern rubber boa)).